The chain runs to 382 residues: Serine protease 43 (382 aa).

An N-terminal signal peptide occupies residues Met-1–Ser-27. The interval Tyr-30–Glu-97 is disordered. Polar residues-rich tracts occupy residues Ala-56–His-68 and Gly-85–Thr-95. The Peptidase S1 domain maps to Val-119–Ser-355. A disulfide bridge links Cys-144 with Cys-160. Catalysis depends on charge relay system residues His-159 and Asp-205. 3 disulfide bridges follow: Cys-239–Cys-313, Cys-272–Cys-293, and Cys-303–Cys-331. The active-site Charge relay system is the Ser-307. Residues Pro-362–Leu-382 form a helical membrane-spanning segment.

The protein belongs to the peptidase S1 family. As to expression, testis-specific. Expressed in germ cells at the stages from late pachytene spermatocytes to spermatids.

It is found in the cell membrane. Its function is as follows. Plays a role in spermatogenesis. Involved in germ cell survival during meiosis. Lacks protease activity in vitro. The protein is Serine protease 43 of Mus musculus (Mouse).